An 82-amino-acid polypeptide reads, in one-letter code: Small ribosomal subunit protein bS16 (82 aa).

This sequence belongs to the bacterial ribosomal protein bS16 family.

This Haemophilus ducreyi (strain 35000HP / ATCC 700724) protein is Small ribosomal subunit protein bS16.